Reading from the N-terminus, the 442-residue chain is Probable carboxypeptidase PAAG_00768 (442 aa).

The first 20 residues, 1–20 (MKLQYLVALLFVQAVPPVTA), serve as a signal peptide directing secretion. The N-linked (GlcNAc...) asparagine glycan is linked to N102. D160 is a Zn(2+) binding site. E192 serves as the catalytic Proton acceptor. Position 193 (E193) interacts with Zn(2+). N-linked (GlcNAc...) asparagine glycosylation occurs at N343.

The protein belongs to the peptidase M20A family. It depends on Zn(2+) as a cofactor.

It localises to the secreted. The protein is Probable carboxypeptidase PAAG_00768 of Paracoccidioides lutzii (strain ATCC MYA-826 / Pb01) (Paracoccidioides brasiliensis).